We begin with the raw amino-acid sequence, 264 residues long: Glutamate racemase (264 aa).

Substrate contacts are provided by residues 10-11 and 42-43; these read DS and YG. The active-site Proton donor/acceptor is cysteine 73. 74–75 provides a ligand contact to substrate; the sequence is NT. The Proton donor/acceptor role is filled by cysteine 183. Residue 184–185 participates in substrate binding; sequence TH.

The protein belongs to the aspartate/glutamate racemases family.

The catalysed reaction is L-glutamate = D-glutamate. It functions in the pathway cell wall biogenesis; peptidoglycan biosynthesis. Functionally, provides the (R)-glutamate required for cell wall biosynthesis. The chain is Glutamate racemase from Streptococcus pyogenes serotype M4 (strain MGAS10750).